The following is a 276-amino-acid chain: Putative phosphoenolpyruvate synthase regulatory protein (276 aa).

156–163 (GVSRSGKT) lines the ADP pocket.

It belongs to the pyruvate, phosphate/water dikinase regulatory protein family. PSRP subfamily.

It carries out the reaction [pyruvate, water dikinase] + ADP = [pyruvate, water dikinase]-phosphate + AMP + H(+). The catalysed reaction is [pyruvate, water dikinase]-phosphate + phosphate + H(+) = [pyruvate, water dikinase] + diphosphate. Bifunctional serine/threonine kinase and phosphorylase involved in the regulation of the phosphoenolpyruvate synthase (PEPS) by catalyzing its phosphorylation/dephosphorylation. The chain is Putative phosphoenolpyruvate synthase regulatory protein from Acidovorax ebreus (strain TPSY) (Diaphorobacter sp. (strain TPSY)).